A 129-amino-acid polypeptide reads, in one-letter code: MSYQFPDNLNYADTHEYVLEEEGLLKIGVSEFAIDQLGDIVFVELADQGATLEKGETFGTIESVKAVEEVYLPFSGEIVSVNESVIDNPELLQNDPIGEGWLVILKPESKVSIADLMTSEEYKSKVMPN.

The region spanning 24–106 is the Lipoyl-binding domain; sequence LLKIGVSEFA…IGEGWLVILK (83 aa). N6-lipoyllysine is present on Lys-65.

Belongs to the GcvH family. In terms of assembly, the glycine cleavage system is composed of four proteins: P, T, L and H. (R)-lipoate is required as a cofactor.

Functionally, the glycine cleavage system catalyzes the degradation of glycine. The H protein shuttles the methylamine group of glycine from the P protein to the T protein. The polypeptide is Glycine cleavage system H protein (Prochlorococcus marinus (strain MIT 9312)).